Reading from the N-terminus, the 485-residue chain is MSLFDHSVSELHKKLNNKEISVTDLVEESYKRIADVEDNVKAFLTLDEENARAKAKELDAKIGAEDNGLLFGMPIGVKDNIVTNGLRTTCASKILANFDPIYDATVVQKLKAADTITIGKLNMDEFAMGSSNENSGFYATKNPWNLDYVPGGSSGGSAAAVAAGEVLFSLGSDTGGSIRQPAAYCGVVGLKPTYGRVSRYGLVAFASSLDQIGPITRTVEDNAYLLQAISGIDRMDATSANVEVGNYLAGLTGDVKGLRIAVPKEYLGEGVGEEARESVLAALKVLEGMGATWEEVSLPHSKYALATYYLLSSSEASANLSRFDGVRYGVRSDNVNNLLDLYKNTRSEGFGDEVKRRIMLGTFALSSGYYDAYYKKAQQVRTLIKNDFENVFANYDVIIGPTTPTPAFKVGEKVDDPMTMYANDILTIPVNLAGVPAISVPCGFGANNMPLGLQIIGKHFDEATIYRVAHAFEQATDYHTKKASL.

Catalysis depends on charge relay system residues Lys78 and Ser153. The active-site Acyl-ester intermediate is Ser177.

It belongs to the amidase family. GatA subfamily. Heterotrimer of A, B and C subunits.

The enzyme catalyses L-glutamyl-tRNA(Gln) + L-glutamine + ATP + H2O = L-glutaminyl-tRNA(Gln) + L-glutamate + ADP + phosphate + H(+). Allows the formation of correctly charged Gln-tRNA(Gln) through the transamidation of misacylated Glu-tRNA(Gln) in organisms which lack glutaminyl-tRNA synthetase. The reaction takes place in the presence of glutamine and ATP through an activated gamma-phospho-Glu-tRNA(Gln). This chain is Glutamyl-tRNA(Gln) amidotransferase subunit A, found in Bacillus cereus (strain ATCC 14579 / DSM 31 / CCUG 7414 / JCM 2152 / NBRC 15305 / NCIMB 9373 / NCTC 2599 / NRRL B-3711).